The chain runs to 227 residues: Ribosomal RNA large subunit methyltransferase E (227 aa).

5 residues coordinate S-adenosyl-L-methionine: Gly-78, Trp-80, Asp-103, Asp-119, and Asp-143. Lys-183 acts as the Proton acceptor in catalysis.

Belongs to the class I-like SAM-binding methyltransferase superfamily. RNA methyltransferase RlmE family.

It is found in the cytoplasm. The catalysed reaction is uridine(2552) in 23S rRNA + S-adenosyl-L-methionine = 2'-O-methyluridine(2552) in 23S rRNA + S-adenosyl-L-homocysteine + H(+). Its function is as follows. Specifically methylates the uridine in position 2552 of 23S rRNA at the 2'-O position of the ribose in the fully assembled 50S ribosomal subunit. The chain is Ribosomal RNA large subunit methyltransferase E from Rickettsia felis (strain ATCC VR-1525 / URRWXCal2) (Rickettsia azadi).